We begin with the raw amino-acid sequence, 601 residues long: N-acetyltransferase ESCO2 (601 aa).

Phosphoserine occurs at positions 29, 75, 223, and 244. Residues 222–243 form a disordered region; sequence SSLENEPSLGRTQKSKSEVIED. Basic and acidic residues predominate over residues 282–305; it reads KEKLIKDSSDDRVSSKEHKVDKNE. The disordered stretch occupies residues 282–315; that stretch reads KEKLIKDSSDDRVSSKEHKVDKNEAFSSEDSLGE. The segment covering 306–315 has biased composition (polar residues); that stretch reads AFSSEDSLGE. S312 is subject to Phosphoserine. The segment at 387–411 adopts a CCHH-type zinc-finger fold; sequence TVCKSCGMIYTASNPEDEMQHVQHH. A Phosphoserine modification is found at S512.

It belongs to the acetyltransferase family. ECO subfamily. As to expression, widely expressed in fetal tissues. In adult, it is expressed in thymus, placenta and small intestine.

It is found in the nucleus. The protein localises to the chromosome. The catalysed reaction is L-lysyl-[protein] + acetyl-CoA = N(6)-acetyl-L-lysyl-[protein] + CoA + H(+). Acetyltransferase required for the establishment of sister chromatid cohesion. Couples the processes of cohesion and DNA replication to ensure that only sister chromatids become paired together. In contrast to the structural cohesins, the deposition and establishment factors are required only during the S phase. Acetylates the cohesin component SMC3. The sequence is that of N-acetyltransferase ESCO2 from Homo sapiens (Human).